Reading from the N-terminus, the 585-residue chain is Protein FAM83D (585 aa).

Residues 1 to 296 (MAARFELLDD…LYAQSEPISS (296 aa)) are DUF1669. The residue at position 295 (Ser-295) is a Phosphoserine. Disordered stretches follow at residues 334 to 411 (LSST…TSSS) and 425 to 482 (AASS…SQGS). Positions 337-585 (TPRKSNLGPE…RDIALYPPYQ (249 aa)) are required for interaction with KIF22 and function in chromosome congression. 2 stretches are compositionally biased toward basic and acidic residues: residues 347-360 (EPPK…RPDS) and 369-383 (DYFH…DSKV). Positions 425-441 (AASSQATVWSKSTTTQT) are enriched in polar residues. Ser-458 carries the phosphoserine modification. The span at 458 to 482 (SPASKMSVSRSSSVRSSSSVSSQGS) shows a compositional bias: low complexity. Phosphothreonine is present on Thr-511.

It belongs to the FAM83 family. Interacts with FBXW7; promotes FBXW7 degradation. May interact with RAF1. Interacts with KIF22; recruits KIF22 to mitotic spindle microtubules. Interacts (via C-terminus) with DYNLL1. Interacts with HMMR. Directly interacts (via DUF1669) with CSNK1A1 and CSNK1A1L. Phosphorylated during mitosis.

The protein resides in the cytoplasm. Its subcellular location is the cytoskeleton. The protein localises to the spindle. It is found in the spindle pole. Its function is as follows. Through the degradation of FBXW7, may act indirectly on the expression and downstream signaling of MTOR, JUN and MYC. May play also a role in cell proliferation through activation of the ERK1/ERK2 signaling cascade. May also be important for proper chromosome congression and alignment during mitosis through its interaction with KIF22. The protein is Protein FAM83D of Mus musculus (Mouse).